Consider the following 545-residue polypeptide: Monocarboxylate transporter 8 (545 aa).

Residues 1–98 (MALPSPASEE…VETRGTARGF (98 aa)) are disordered. Position 2 is an N-acetylalanine (A2). Residues 2–102 (ALPSPASEEA…GTARGFQPPE (101 aa)) are Cytoplasmic-facing. 2 repeat units span residues 29 to 50 (PVPEPEPEPEPEPEPDPEPVPV) and 51 to 72 (PPPEPQPEPEPQPLPDPAPLPE). Residues 29-72 (PVPEPEPEPEPEPEPDPEPVPVPPPEPQPEPEPQPLPDPAPLPE) are 2 X 22 AA approximate tandem repeats. Residues 33–45 (PEPEPEPEPEPDP) are compositionally biased toward acidic residues. The segment covering 46–70 (EPVPVPPPEPQPEPEPQPLPDPAPL) has biased composition (pro residues). A helical membrane pass occupies residues 103–123 (GGFGWIVVFAATWCNGSIFGI). At 124 to 149 (HNSVGILYSMLLEEEKEKNRQVEFQA) the chain is on the extracellular side. The chain crosses the membrane as a helical span at residues 150–170 (AWVGALAMGMIFFCSPIVSIF). Residues 171-177 (TDRLGCR) are Cytoplasmic-facing. A helical membrane pass occupies residues 178 to 198 (ITATTGAAVAFIGLHTSSFTS). Over 199–206 (SLSLRYFT) the chain is Extracellular. The helical transmembrane segment at 207–227 (YGILFGCGCSFAFQPSLVILG) threads the bilayer. Topologically, residues 228 to 235 (HYFQRRLG) are cytoplasmic. The helical transmembrane segment at 236–256 (LANGVVSAGSSIFSMSFPFLI) threads the bilayer. Over 257–264 (KMLGDKIK) the chain is Extracellular. A helical membrane pass occupies residues 265-285 (LAQTFQVLSTFMFVLTLLSLT). Residues 286 to 328 (YRPLLPSSQDTPSKRGAHTLRQRFLVQFRKYFNMRVFRQRTYR) are Cytoplasmic-facing. A helical membrane pass occupies residues 329-349 (IWAFGIAAAALGYFVPYVHLM). The Extracellular portion of the chain corresponds to 350–362 (KYVEDKFKEIKET). The chain crosses the membrane as a helical span at residues 363-383 (WVLLVCIGATSGLGRLVSGHI). At 384–392 (SDSIPGLKK) the chain is on the cytoplasmic side. A helical transmembrane segment spans residues 393 to 413 (IYLQVLSFLLLGLMSMMIPLC). Over 414–415 (RD) the chain is Extracellular. Residues 416–436 (FGGLIVVCLFLGLCDGFFITI) form a helical membrane-spanning segment. At 437 to 453 (MAPIAFELVGPMQASQA) the chain is on the cytoplasmic side. A helical transmembrane segment spans residues 454 to 474 (IGYLLGMMALPMIAGPPIAGL). Topologically, residues 475 to 483 (LRNCFGDYH) are extracellular. A helical membrane pass occupies residues 484-504 (VAFYFAGVPPIIGAVILFFVP). Residues 505 to 545 (LMHQRMFKKEQRDSSKDKMLSHDPDPNGELLPGSPTPEEPI) are Cytoplasmic-facing. Positions 514–529 (EQRDSSKDKMLSHDPD) are enriched in basic and acidic residues. The segment at 514-545 (EQRDSSKDKMLSHDPDPNGELLPGSPTPEEPI) is disordered. The residue at position 540 (T540) is a Phosphothreonine.

The protein belongs to the major facilitator superfamily. Monocarboxylate porter (TC 2.A.1.13) family. Monomer. Homodimer. Homooligomer. As to expression, expressed in cerebral microvessels.

The protein localises to the cell membrane. Its subcellular location is the apical cell membrane. The enzyme catalyses 3,3',5-triiodo-L-thyronine(out) = 3,3',5-triiodo-L-thyronine(in). It catalyses the reaction 3,3',5'-triiodo-L-thyronine(out) = 3,3',5'-triiodo-L-thyronine(in). The catalysed reaction is L-thyroxine(out) = L-thyroxine(in). It carries out the reaction 3,3'-diiodo-L-thyronine(out) = 3,3'-diiodo-L-thyronine(in). Functionally, specific thyroid hormone transmembrane transporter, that mediates both uptake and efflux of thyroid hormones across the cell membrane independently of pH or a Na(+) gradient. Major substrates are the iodothyronines T3 and T4 and to a lesser extent rT3 and 3,3-diiodothyronine (3,3'-T2). Acts as an important mediator of thyroid hormone transport, especially T3, through the blood-brain barrier. The polypeptide is Monocarboxylate transporter 8 (Slc16a2) (Mus musculus (Mouse)).